The chain runs to 367 residues: Ribosome-binding ATPase YchF (367 aa).

Residues 2–258 (LSAGIVGLPN…LKLEQRQYFL (257 aa)) form the OBG-type G domain. 11–16 (NVGKST) lines the ATP pocket. Mg(2+) is bound by residues serine 15 and threonine 35. The TGS domain maps to 281-364 (NLWSFFTFGK…KDGDVCNFKF (84 aa)).

The protein belongs to the TRAFAC class OBG-HflX-like GTPase superfamily. OBG GTPase family. YchF/OLA1 subfamily. Requires Mg(2+) as cofactor.

ATPase that binds to both the 70S ribosome and the 50S ribosomal subunit in a nucleotide-independent manner. The polypeptide is Ribosome-binding ATPase YchF (Mycoplasma genitalium (strain ATCC 33530 / DSM 19775 / NCTC 10195 / G37) (Mycoplasmoides genitalium)).